A 414-amino-acid chain; its full sequence is WD repeat-containing protein jip5 (414 aa).

5 WD repeats span residues 9 to 48, 73 to 112, 118 to 159, 222 to 263, and 319 to 356; these read PLSA…SDTD, RHKG…VENK, AKDG…SPVS, VSSV…DQDE, and DETE…DGMD. The segment at 39-65 is disordered; the sequence is RLPSEESDTDGDGAESTSSSRNGKGHI. The interval 352 to 414 is disordered; sequence SDGMDGDMAG…QDIMGFADID (63 aa). Residues 369 to 383 are compositionally biased toward acidic residues; that stretch reads DSDDSDDGDDSDDSD.

The protein belongs to the WD repeat WDR55 family.

The protein localises to the nucleus. The protein resides in the nucleolus. The polypeptide is WD repeat-containing protein jip5 (jip5) (Neosartorya fischeri (strain ATCC 1020 / DSM 3700 / CBS 544.65 / FGSC A1164 / JCM 1740 / NRRL 181 / WB 181) (Aspergillus fischerianus)).